Reading from the N-terminus, the 141-residue chain is 6,7-dimethyl-8-ribityllumazine synthase (141 aa).

Residues Phe-13, 45 to 47, and 69 to 71 contribute to the 5-amino-6-(D-ribitylamino)uracil site; these read SFE and AII. A (2S)-2-hydroxy-3-oxobutyl phosphate-binding site is contributed by 74–75; the sequence is DT. His-77 (proton donor) is an active-site residue. Leu-102 is a binding site for 5-amino-6-(D-ribitylamino)uracil. Residue Arg-117 participates in (2S)-2-hydroxy-3-oxobutyl phosphate binding.

Belongs to the DMRL synthase family.

It carries out the reaction (2S)-2-hydroxy-3-oxobutyl phosphate + 5-amino-6-(D-ribitylamino)uracil = 6,7-dimethyl-8-(1-D-ribityl)lumazine + phosphate + 2 H2O + H(+). The protein operates within cofactor biosynthesis; riboflavin biosynthesis; riboflavin from 2-hydroxy-3-oxobutyl phosphate and 5-amino-6-(D-ribitylamino)uracil: step 1/2. Functionally, catalyzes the formation of 6,7-dimethyl-8-ribityllumazine by condensation of 5-amino-6-(D-ribitylamino)uracil with 3,4-dihydroxy-2-butanone 4-phosphate. This is the penultimate step in the biosynthesis of riboflavin. The chain is 6,7-dimethyl-8-ribityllumazine synthase from Methanopyrus kandleri (strain AV19 / DSM 6324 / JCM 9639 / NBRC 100938).